A 228-amino-acid polypeptide reads, in one-letter code: Cell surface Cu-only superoxide dismutase 5 (228 aa).

A signal peptide spans 1–15; sequence MKYLSIFLLATFALA. A glycan (N-linked (GlcNAc...) asparagine) is linked at Asn53. The Cu cation site is built by His75 and His77. N-linked (GlcNAc...) asparagine glycosylation occurs at Asn86. Cys87 and Cys162 are disulfide-bonded. Cu cation is bound at residue His93. N-linked (GlcNAc...) asparagine glycosylation is present at Asn98. Cu cation is bound at residue His153. Residues Asn156, Asn164, Asn176, Asn181, and Asn192 are each glycosylated (N-linked (GlcNAc...) asparagine). Low complexity predominate over residues 176–201; sequence NTTMSNSSSSSSQSAVNTSSSMASTA. Residues 176-204 form a disordered region; that stretch reads NTTMSNSSSSSSQSAVNTSSSMASTAPQG. Asn205 carries GPI-anchor amidated asparagine lipidation. A propeptide spans 206–228 (removed in mature form); the sequence is GAERAVVNGLLAAGVVGVIAALI.

This sequence belongs to the Cu-Zn superoxide dismutase family. In terms of assembly, monomer. The cofactor is Cu cation. The GPI-anchor is attached to the protein in the endoplasmic reticulum and serves to target the protein to the cell surface. There, the glucosamine-inositol phospholipid moiety is cleaved off and the GPI-modified mannoprotein is covalently attached via its lipidless GPI glycan remnant to the 1,6-beta-glucan of the outer cell wall layer.

It is found in the secreted. The protein resides in the cell wall. It localises to the membrane. It carries out the reaction 2 superoxide + 2 H(+) = H2O2 + O2. Its activity is regulated as follows. Secreted in a disulfide-oxidized form and apo-pools of secreted SOD5 can readily capture extracellular copper for rapid induction of enzyme activity. Superoxide dismutases serve to convert damaging superoxide radicals, a key form of ROS, to less damaging hydrogen peroxide that can be converted into water by catalase action. Degrades host-derived reactive oxygen species to escape innate immune surveillance. Involved in the occurrence of miconazole-tolerant persisters in biofilms. Persisters are cells that survive high doses of an antimicrobial agent. The unusual attributes of SOD5-like fungal proteins, including the absence of zinc and an open active site that readily captures extracellular copper, make these SODs well suited to meet challenges in zinc and copper availability at the host-pathogen interface. In Candida albicans (strain SC5314 / ATCC MYA-2876) (Yeast), this protein is Cell surface Cu-only superoxide dismutase 5 (SOD5).